Consider the following 441-residue polypeptide: Coiled-coil domain-containing protein 91 (441 aa).

The GGA1-binding motif stretch occupies residues 1-16 (MDDDDFGGFEAAETFD). The interval 1–26 (MDDDDFGGFEAAETFDGGSGETQTTS) is disordered. 2 positions are modified to phosphoserine: Ser43 and Ser46. Coiled-coil stretches lie at residues 130–209 (SNIQ…GHEA) and 249–407 (ELLN…KRLD). The homodimerization stretch occupies residues 210–413 (LSIIVDEYKA…KRLDQVIRQR (204 aa)).

Homodimer. Interacts with GGA1, GGA2 and AP1G1. Widely expressed.

Its subcellular location is the membrane. It localises to the golgi apparatus. The protein resides in the trans-Golgi network membrane. The protein localises to the trans-Golgi network. Involved in the regulation of membrane traffic through the trans-Golgi network (TGN). Functions in close cooperation with the GGAs in the sorting of hydrolases to lysosomes. The sequence is that of Coiled-coil domain-containing protein 91 (CCDC91) from Homo sapiens (Human).